Reading from the N-terminus, the 189-residue chain is Lipid A acyltransferase PagP (189 aa).

The first 24 residues, 1-24 (MLRRFSLFSLGFLGWLLVSGNASA), serve as a signal peptide directing secretion. Catalysis depends on residues His61, Asp104, and Ser105.

It belongs to the lipid A palmitoyltransferase family. As to quaternary structure, homodimer.

The protein resides in the cell outer membrane. The catalysed reaction is a lipid A + a 1,2-diacyl-sn-glycero-3-phosphocholine = a hepta-acyl lipid A + a 2-acyl-sn-glycero-3-phosphocholine. The enzyme catalyses a lipid IVA + a 1,2-diacyl-sn-glycero-3-phosphocholine = a lipid IVB + a 2-acyl-sn-glycero-3-phosphocholine. It catalyses the reaction a lipid IIA + a 1,2-diacyl-sn-glycero-3-phosphocholine = a lipid IIB + a 2-acyl-sn-glycero-3-phosphocholine. In terms of biological role, transfers a fatty acid residue from the sn-1 position of a phospholipid to the N-linked hydroxyfatty acid chain on the proximal unit of lipid A or its precursors. The sequence is that of Lipid A acyltransferase PagP from Klebsiella pneumoniae subsp. pneumoniae (strain ATCC 700721 / MGH 78578).